Here is a 350-residue protein sequence, read N- to C-terminus: S-adenosylmethionine:tRNA ribosyltransferase-isomerase (350 aa).

The protein belongs to the QueA family. As to quaternary structure, monomer.

Its subcellular location is the cytoplasm. It catalyses the reaction 7-aminomethyl-7-carbaguanosine(34) in tRNA + S-adenosyl-L-methionine = epoxyqueuosine(34) in tRNA + adenine + L-methionine + 2 H(+). It functions in the pathway tRNA modification; tRNA-queuosine biosynthesis. Transfers and isomerizes the ribose moiety from AdoMet to the 7-aminomethyl group of 7-deazaguanine (preQ1-tRNA) to give epoxyqueuosine (oQ-tRNA). The protein is S-adenosylmethionine:tRNA ribosyltransferase-isomerase of Bacillus cereus (strain B4264).